The following is a 1141-amino-acid chain: MAASRSSSRISFAKIIEPLEVPDLLALQTQSFDWLIGSDAWAERVQEAIDSGRDDVPITSGLEEVFEEISPIEDFSGSMSLSFRDHRFEPPKYSVEECKDKDMTFSAPLFVTAEFTNNTTGEIKSQTVFMGDFPLMTPKGTFVINGTERVVVSQLVRSPGVYFERSLDKASDKDLYSCKVIPSRGAWLEFEIDKRDTVGVRIDRKRRQSVTVLLKALGWDEARILERFGDFPSMRITLEKDHTASQDDALLDIYRKLRPGEPPTRESAQTLLENLFFNPKRYDLAKVGRYKVNKKLTLEIAHDVGVLTEDDIVRTIEYVVKLHAGADPAEYEVDDIDHFGNRRLRTVGELIQNQVRLGLARMERVVRERMTTQDVEAITPQTLINIRPVVASIKEFFGTSQLSQFMDQTNPLAGLTHKRRLSALGPGGLSRERAGFEVRDVHPSHYGRMCPIETPEGPNIGLIGSLSTFARVNPFGFVETPYRKVVNGRVTDQIDYLTADEEDRHVKAQANTPLSPDGTFAEDRVLVRRKGGEVEFIPPDEVDYMDVSPRQMVSVATAMIPFLEHDDANRALMGSNMQRQSVPLLRSEAPLVGTGMEARAAKDAGDVVVCVQAGVVEDLSADYITVMHDDGTRRTYRLAKFRRSNQGTCINQKPIVFEGDRVEAGQVIADGPCTDNGEMALGKNLLVAFMPWEGHNYEDAIILSQRLVQDDVLSSIHIEEHEVDARDTKLGPEEITRDIPNVAEEVLADLDERGIIRIGAEVSPGDVLVGKVTPKGETELTPEERLLRAIFGEKAREVRDTSLKVPHGESGKVIGVRVFSREDGDELPPGVNELVRVYVAQKRKITDGDKLAGRHGNKGVIAKILPQEDMPFLEDGTPVDIVLNPHGVPRRMNIGQILETHLGWVAKTGWQVDAGTEDWKERLRGIGADSSTPGTNVATPVFDGAREEEITGLLDSTLPNRDGVQLIGSSGKATLFDGRTGEPYPYPVAVGYIYILKLLHLVDDKIHARSTGPYSMITQQPLGGKAQFGGQRFGEMEVWALEAYGAAYALQELLTIKSDDVVGRVKVYEAIVKGENIPEPGIPESFKVLIKEMQSLCLNVEVLSSDGVQIEMRDTDEDVFRAAEELGIDLSRREPSSVEEV.

It belongs to the RNA polymerase beta chain family. In terms of assembly, the RNAP catalytic core consists of 2 alpha, 1 beta, 1 beta' and 1 omega subunit. When a sigma factor is associated with the core the holoenzyme is formed, which can initiate transcription.

The enzyme catalyses RNA(n) + a ribonucleoside 5'-triphosphate = RNA(n+1) + diphosphate. DNA-dependent RNA polymerase catalyzes the transcription of DNA into RNA using the four ribonucleoside triphosphates as substrates. The sequence is that of DNA-directed RNA polymerase subunit beta from Frankia alni (strain DSM 45986 / CECT 9034 / ACN14a).